An 86-amino-acid chain; its full sequence is Large ribosomal subunit protein bL31B (86 aa).

Belongs to the bacterial ribosomal protein bL31 family. Type B subfamily. In terms of assembly, part of the 50S ribosomal subunit.

This Vibrio parahaemolyticus serotype O3:K6 (strain RIMD 2210633) protein is Large ribosomal subunit protein bL31B.